Reading from the N-terminus, the 463-residue chain is MPAEGACDAASLMTLTATLSDVTGLANLLKSVAIQTHAVVIASSSGLEIITELNRTLQAHAYLYSHMFDSYRFENAQDDVRGSTSLQARSRPKKRSKLTSKHAETADSQSSAASSDHESGQSQAHTKKRFRANSHSYAQEADRVHDEPDSVSFEVNLQTWISCLNIFGGVGPSRPHSSSSGLPGFRPEQGSAEAPPGGRGYQRTRYGVADAYGAERGTSVERGFDRNPFSSSAKATRMKLSYQGHGNPLVLELEQDANVLTRVSMSTYEPSFLTDMVFEPQNMVAQVIVASELMQSAFTEIDASCKKLSILITSPHSLSTYDGDQRTEAPAPTNRNTSASMLKFRAISDTGSSEMEFPASLTSSDPTGVIEKFVALPGSSEQWYDFTLLSRTMSVLRSSIKTSLRMDEAGLISFQFMMPKYRRAAAAGAPLTNAAAGQAAHEDEQDAFCEFLCCPLDTSTLIV.

Disordered stretches follow at residues 81-128 and 172-203; these read RGST…HTKK and PSRP…GYQR. Residues 90-100 are compositionally biased toward basic residues; sequence SRPKKRSKLTS.

Belongs to the rad1 family.

The protein resides in the nucleus. It carries out the reaction Exonucleolytic cleavage in the 3'- to 5'-direction to yield nucleoside 5'-phosphates.. In terms of biological role, plays a central role in regulating the genetic system of this fungus. Has a 3'--&gt;5' exonuclease activity. The protein is DNA repair exonuclease REC1 (REC1) of Mycosarcoma maydis (Corn smut fungus).